A 285-amino-acid polypeptide reads, in one-letter code: Extracellular metalloprotease NCU07200 (285 aa).

A signal peptide spans 1–18; it reads MQIKSFLLAAAAAPAALG. A Zn(2+)-binding site is contributed by histidine 197. The active site involves glutamate 198. Residue histidine 201 participates in Zn(2+) binding. Residues cysteine 233 and cysteine 260 are joined by a disulfide bond. Asparagine 282 is a glycosylation site (N-linked (GlcNAc...) asparagine).

This sequence belongs to the peptidase M43B family.

It is found in the secreted. Its function is as follows. Secreted metalloproteinase that allows assimilation of proteinaceous substrates. In Neurospora crassa (strain ATCC 24698 / 74-OR23-1A / CBS 708.71 / DSM 1257 / FGSC 987), this protein is Extracellular metalloprotease NCU07200.